Consider the following 858-residue polypeptide: Conidiophore development regulator abaA (858 aa).

Positions 1 to 22 (MSSSLYHPRPVLSSQRYTPSPD) are disordered. Positions 128 to 221 (QKDKGGVWRR…QVVKKFFEDL (94 aa)) form a DNA-binding region, TEA. The segment covering 500–522 (VEHQRKKEKRTKGDDRKNLDRAG) has biased composition (basic and acidic residues). Disordered stretches follow at residues 500 to 535 (VEHQ…GDAA) and 792 to 858 (TGAG…AGGW). Positions 514-521 (DRKNLDRA) match the Nuclear localization signal motif. Residues 809-822 (SSDQTALWTQSQWA) show a composition bias toward polar residues.

Belongs to the TEC1 family.

The protein resides in the nucleus. Functionally, abaA and wetA are pivotal regulators of conidiophore development and conidium maturation. They act individually and together to regulate their own expression and that of numerous other sporulation-specific genes. Binds to the sequence 5'-CATTCY-3', where Y is a pyrimidine, making both major- and minor-groove contacts. Plays a pivotal role in conidiation by regulating cell cycle pathways and other conidiation-related genes. The polypeptide is Conidiophore development regulator abaA (Gibberella zeae (strain ATCC MYA-4620 / CBS 123657 / FGSC 9075 / NRRL 31084 / PH-1) (Wheat head blight fungus)).